Here is a 509-residue protein sequence, read N- to C-terminus: Maturase K (509 aa).

This sequence belongs to the intron maturase 2 family. MatK subfamily.

It localises to the plastid. Its subcellular location is the chloroplast. Usually encoded in the trnK tRNA gene intron. Probably assists in splicing its own and other chloroplast group II introns. The protein is Maturase K of Anthocercis angustifolia (Narrow-leaf ray-flower).